Here is a 270-residue protein sequence, read N- to C-terminus: MAVGVFDSGLGGLTVLDAVQRRLPEVPFVYFGDNAHAPYGVRDADDIFHLTCAATERLWAEGCDLVILACNTASAAALKRMQETWIPKDKRVLGVFVPLIEALTERQWGDNSPPREVAVKHVALFATPATVASRAFQRELAFRAIGVDVEAQPCGGVVDAIEQGDEILAEALVRSHVEALKRRMPHPQAAILGCTHYPLMEPIFQEALGPEVSVYSQANLVAESLADYLARKPEFAGDGTESKFLTTGDPRSVSNKATQFLRRRITFEAA.

Substrate contacts are provided by residues 7 to 8 (DS) and 39 to 40 (YG). Cysteine 70 acts as the Proton donor/acceptor in catalysis. 71–72 (NT) lines the substrate pocket. The Proton donor/acceptor role is filled by cysteine 194. 195–196 (TH) is a substrate binding site.

It belongs to the aspartate/glutamate racemases family.

It catalyses the reaction L-glutamate = D-glutamate. The protein operates within cell wall biogenesis; peptidoglycan biosynthesis. In terms of biological role, provides the (R)-glutamate required for cell wall biosynthesis. The polypeptide is Glutamate racemase (Cereibacter sphaeroides (strain ATCC 17023 / DSM 158 / JCM 6121 / CCUG 31486 / LMG 2827 / NBRC 12203 / NCIMB 8253 / ATH 2.4.1.) (Rhodobacter sphaeroides)).